The chain runs to 243 residues: uncharacterized protein (243 aa).

The signal sequence occupies residues Met-1–Gly-16. A lipid anchor (N-palmitoyl cysteine) is attached at Cys-17. Cys-17 carries S-diacylglycerol cysteine lipidation.

The protein localises to the cell membrane. This is an uncharacterized protein from Bacillus subtilis (strain 168).